A 161-amino-acid chain; its full sequence is Transcription antitermination protein NusB (161 aa).

Belongs to the NusB family.

Its function is as follows. Involved in transcription antitermination. Required for transcription of ribosomal RNA (rRNA) genes. Binds specifically to the boxA antiterminator sequence of the ribosomal RNA (rrn) operons. This chain is Transcription antitermination protein NusB, found in Nitrobacter winogradskyi (strain ATCC 25391 / DSM 10237 / CIP 104748 / NCIMB 11846 / Nb-255).